Here is a 61-residue protein sequence, read N- to C-terminus: Small ribosomal subunit protein uS14 (61 aa).

Residues Cys24, Cys27, Cys40, and Cys43 each contribute to the Zn(2+) site.

It belongs to the universal ribosomal protein uS14 family. Zinc-binding uS14 subfamily. In terms of assembly, part of the 30S ribosomal subunit. Contacts proteins S3 and S10. It depends on Zn(2+) as a cofactor.

In terms of biological role, binds 16S rRNA, required for the assembly of 30S particles and may also be responsible for determining the conformation of the 16S rRNA at the A site. The chain is Small ribosomal subunit protein uS14 from Oleidesulfovibrio alaskensis (strain ATCC BAA-1058 / DSM 17464 / G20) (Desulfovibrio alaskensis).